A 338-amino-acid polypeptide reads, in one-letter code: Glyceraldehyde-3-phosphate dehydrogenase, cytosolic (338 aa).

The interval 2–153 is binding to NAD; that stretch reads ADKKIKIGIN…YKSDLNIVSN (152 aa). Residues 15–16 and D37 contribute to the NAD(+) site; that span reads RI. The external loop stretch occupies residues 56-75; sequence GQWKHNELKVKDEKTLLFGE. Position 84 (R84) interacts with NAD(+). A catalytic region spans residues 154-338; sequence ASCTTNCLAP…VDLIIHMSKA (185 aa). 155 to 157 provides a ligand contact to D-glyceraldehyde 3-phosphate; the sequence is SCT. Residue C156 is the Nucleophile of the active site. 2 positions are modified to S-nitrosocysteine: C156 and C160. Residues 183–206 are S-loop; sequence HSITATQKTVDGPSMKDWRGGRAA. D-glyceraldehyde 3-phosphate contacts are provided by residues T186, 215 to 216, and R238; that span reads TG. N320 contacts NAD(+).

This sequence belongs to the glyceraldehyde-3-phosphate dehydrogenase family. As to quaternary structure, homotetramer.

It localises to the cytoplasm. The enzyme catalyses D-glyceraldehyde 3-phosphate + phosphate + NAD(+) = (2R)-3-phospho-glyceroyl phosphate + NADH + H(+). The protein operates within carbohydrate degradation; glycolysis; pyruvate from D-glyceraldehyde 3-phosphate: step 1/5. Key enzyme in glycolysis that catalyzes the first step of the pathway by converting D-glyceraldehyde 3-phosphate (G3P) into 3-phospho-D-glyceroyl phosphate. Essential for the maintenance of cellular ATP levels and carbohydrate metabolism. The chain is Glyceraldehyde-3-phosphate dehydrogenase, cytosolic (GAPC) from Sinapis alba (White mustard).